We begin with the raw amino-acid sequence, 560 residues long: Putative transport protein VSAL_I2029 (560 aa).

5 helical membrane-spanning segments follow: residues I14–S34, L37–F57, F66–L86, L94–F114, and N161–A181. 2 RCK C-terminal domains span residues R203 to G292 and K293 to F376. The next 5 membrane-spanning stretches (helical) occupy residues L386–F406, V409–L429, G451–F471, V478–A498, and A539–L559.

It belongs to the AAE transporter (TC 2.A.81) family. YbjL subfamily.

Its subcellular location is the cell membrane. In Aliivibrio salmonicida (strain LFI1238) (Vibrio salmonicida (strain LFI1238)), this protein is Putative transport protein VSAL_I2029.